The chain runs to 939 residues: Isoleucine--tRNA ligase (939 aa).

A 'HIGH' region motif is present at residues 59 to 69 (PYANGDIHIGH). Glutamate 570 is an L-isoleucyl-5'-AMP binding site. The 'KMSKS' region signature appears at 611-615 (KMSKS). Residue lysine 614 coordinates ATP. Cysteine 902, cysteine 905, cysteine 922, and cysteine 925 together coordinate Zn(2+).

Belongs to the class-I aminoacyl-tRNA synthetase family. IleS type 1 subfamily. In terms of assembly, monomer. Requires Zn(2+) as cofactor.

Its subcellular location is the cytoplasm. The enzyme catalyses tRNA(Ile) + L-isoleucine + ATP = L-isoleucyl-tRNA(Ile) + AMP + diphosphate. Catalyzes the attachment of isoleucine to tRNA(Ile). As IleRS can inadvertently accommodate and process structurally similar amino acids such as valine, to avoid such errors it has two additional distinct tRNA(Ile)-dependent editing activities. One activity is designated as 'pretransfer' editing and involves the hydrolysis of activated Val-AMP. The other activity is designated 'posttransfer' editing and involves deacylation of mischarged Val-tRNA(Ile). This Nitrosomonas europaea (strain ATCC 19718 / CIP 103999 / KCTC 2705 / NBRC 14298) protein is Isoleucine--tRNA ligase.